The chain runs to 336 residues: Holliday junction branch migration complex subunit RuvB (336 aa).

The large ATPase domain (RuvB-L) stretch occupies residues 4 to 185 (MDERLLSGES…FGVLSRLEYY (182 aa)). ATP is bound by residues L24, R25, G66, K69, T70, T71, 132-134 (EDF), R175, Y185, and R222. T70 provides a ligand contact to Mg(2+). The interval 186-256 (TVDQLSAIVE…ITQMALELLQ (71 aa)) is small ATPAse domain (RuvB-S). The segment at 259 to 336 (KLGLDHIDHK…EHFGMEMPKV (78 aa)) is head domain (RuvB-H). The DNA site is built by R314 and R319.

This sequence belongs to the RuvB family. As to quaternary structure, homohexamer. Forms an RuvA(8)-RuvB(12)-Holliday junction (HJ) complex. HJ DNA is sandwiched between 2 RuvA tetramers; dsDNA enters through RuvA and exits via RuvB. An RuvB hexamer assembles on each DNA strand where it exits the tetramer. Each RuvB hexamer is contacted by two RuvA subunits (via domain III) on 2 adjacent RuvB subunits; this complex drives branch migration. In the full resolvosome a probable DNA-RuvA(4)-RuvB(12)-RuvC(2) complex forms which resolves the HJ.

It is found in the cytoplasm. The enzyme catalyses ATP + H2O = ADP + phosphate + H(+). The RuvA-RuvB-RuvC complex processes Holliday junction (HJ) DNA during genetic recombination and DNA repair, while the RuvA-RuvB complex plays an important role in the rescue of blocked DNA replication forks via replication fork reversal (RFR). RuvA specifically binds to HJ cruciform DNA, conferring on it an open structure. The RuvB hexamer acts as an ATP-dependent pump, pulling dsDNA into and through the RuvAB complex. RuvB forms 2 homohexamers on either side of HJ DNA bound by 1 or 2 RuvA tetramers; 4 subunits per hexamer contact DNA at a time. Coordinated motions by a converter formed by DNA-disengaged RuvB subunits stimulates ATP hydrolysis and nucleotide exchange. Immobilization of the converter enables RuvB to convert the ATP-contained energy into a lever motion, pulling 2 nucleotides of DNA out of the RuvA tetramer per ATP hydrolyzed, thus driving DNA branch migration. The RuvB motors rotate together with the DNA substrate, which together with the progressing nucleotide cycle form the mechanistic basis for DNA recombination by continuous HJ branch migration. Branch migration allows RuvC to scan DNA until it finds its consensus sequence, where it cleaves and resolves cruciform DNA. This is Holliday junction branch migration complex subunit RuvB from Bacillus cereus (strain ZK / E33L).